The primary structure comprises 57 residues: RPDFCELPAETGLCKAYIRSFHYNLAAQQCLQFIYGGCGGNANRFKTIDECRRTCVG.

Residues 5–55 (CELPAETGLCKAYIRSFHYNLAAQQCLQFIYGGCGGNANRFKTIDECRRTC) enclose the BPTI/Kunitz inhibitor domain. Disulfide bonds link Cys-5–Cys-55, Cys-14–Cys-38, and Cys-30–Cys-51.

Belongs to the venom Kunitz-type family. In terms of tissue distribution, expressed by the venom gland.

The protein resides in the secreted. In terms of biological role, serine protease inhibitor. The protein is Kunitz-type serine protease inhibitor 2 of Hemachatus haemachatus (Rinkhals).